The sequence spans 538 residues: Putative outer membrane porin BglH (538 aa).

The first 25 residues, 1-25 (MFRRNIITSAILLMAPLAFSAQSLA), serve as a signal peptide directing secretion.

It belongs to the porin LamB (TC 1.B.3) family.

It localises to the cell outer membrane. May be a sugar porin with a broad carbohydrate specificity. The protein is Putative outer membrane porin BglH (bglH) of Escherichia coli O6:H1 (strain CFT073 / ATCC 700928 / UPEC).